The chain runs to 255 residues: Indole-3-glycerol phosphate synthase (255 aa).

This sequence belongs to the TrpC family.

The catalysed reaction is 1-(2-carboxyphenylamino)-1-deoxy-D-ribulose 5-phosphate + H(+) = (1S,2R)-1-C-(indol-3-yl)glycerol 3-phosphate + CO2 + H2O. The protein operates within amino-acid biosynthesis; L-tryptophan biosynthesis; L-tryptophan from chorismate: step 4/5. The chain is Indole-3-glycerol phosphate synthase (trpC) from Priestia megaterium (strain ATCC 12872 / QMB1551) (Bacillus megaterium).